We begin with the raw amino-acid sequence, 80 residues long: UPF0154 protein SH1564 (80 aa).

A helical transmembrane segment spans residues 4 to 24 (WLAILLIIVALIGGLVGGFFL).

This sequence belongs to the UPF0154 family.

The protein resides in the membrane. The sequence is that of UPF0154 protein SH1564 from Staphylococcus haemolyticus (strain JCSC1435).